The following is a 131-amino-acid chain: Histone H2B.2 (131 aa).

Over residues 1-19 (MSSAAEKKPASKAPAEKKP) the composition is skewed to basic and acidic residues. A disordered region spans residues 1–37 (MSSAAEKKPASKAPAEKKPAAKKTSTSVDGKKRSKVR). 2 positions are modified to N6-acetyllysine; alternate: lysine 7 and lysine 8. Glycyl lysine isopeptide (Lys-Gly) (interchain with G-Cter in SUMO); alternate cross-links involve residues lysine 7 and lysine 8. Serine 11 carries the phosphoserine modification. Lysine 12 bears the N6-acetyllysine mark. Lysine 17, lysine 18, lysine 22, and lysine 23 each carry N6-acetyllysine; alternate. Residues lysine 17 and lysine 18 each participate in a glycyl lysine isopeptide (Lys-Gly) (interchain with G-Cter in SUMO); alternate cross-link. N6-butyryllysine; alternate is present on lysine 22. At lysine 23 the chain carries N6-methyllysine; alternate. Lysine 35 bears the N6-succinyllysine mark. Lysine 38 carries the post-translational modification N6,N6-dimethyllysine. The residue at position 47 (lysine 47) is an N6-succinyllysine. Lysine 124 participates in a covalent cross-link: Glycyl lysine isopeptide (Lys-Gly) (interchain with G-Cter in ubiquitin).

This sequence belongs to the histone H2B family. The nucleosome is a histone octamer containing two molecules each of H2A, H2B, H3 and H4 assembled in one H3-H4 heterotetramer and two H2A-H2B heterodimers. The octamer wraps approximately 147 bp of DNA. Interacts with NAP1. Post-translationally, monoubiquitinated by the RAD6/UBC2-BRE1 complex to form H2BK123ub1. H2BK123ub1 gives a specific tag for epigenetic transcriptional activation and is also prerequisite for H3K4me and H3K79me formation. H2BK123ub1 also modulates the formation of double-strand breaks during meiosis and is a prerequisite for DNA-damage checkpoint activation. Deubiquitination is performed by UBP8 in presence of SGF11. In terms of processing, phosphorylated by STE20 to form H2BS10ph during progression through meiotic prophase. May be correlated with chromosome condensation. H2BS10ph is also formed after H(2)O(2) treatment, and is a step leading to apoptosis. Acetylated by GCN5, a component of the SAGA complex, to form H2BK11ac and H2BK16ac. H2BK16ac can also be formed by ESA1, a component of the NuA4 histone acetyltransferase (HAT) complex. Acetylation of N-terminal lysines and particularly formation of H2BK11acK16ac has a positive effect on transcription. Post-translationally, sumoylation to form H2BK6su or H2BK7su, and probably also H2BK16su or H2BK17su, occurs preferentially near the telomeres and represses gene transcription.

It is found in the nucleus. It localises to the chromosome. Functionally, core component of nucleosome. Nucleosomes wrap and compact DNA into chromatin, limiting DNA accessibility to the cellular machineries which require DNA as a template. Histones thereby play a central role in transcription regulation, DNA repair, DNA replication and chromosomal stability. DNA accessibility is regulated via a complex set of post-translational modifications of histones, also called histone code, and nucleosome remodeling. The polypeptide is Histone H2B.2 (HTB2) (Saccharomyces cerevisiae (strain ATCC 204508 / S288c) (Baker's yeast)).